Reading from the N-terminus, the 37-residue chain is Large ribosomal subunit protein bL36c (37 aa).

Belongs to the bacterial ribosomal protein bL36 family.

It is found in the plastid. In Cuscuta exaltata (Tall dodder), this protein is Large ribosomal subunit protein bL36c.